The chain runs to 630 residues: Zinc finger protein MSN4 (630 aa).

At M1 the chain carries N-acetylmethionine. A compositionally biased stretch (low complexity) spans 37–56; sequence TTNVSATSSNDNSANNSISS. 2 disordered regions span residues 37–77 and 115–137; these read TTNV…ATNT and FVNDGEKQSSNANGKKNGGDKIY. S178 is subject to Phosphoserine. Residues 237–245 carry the 9aaTAD motif; it reads SILEDFVSS. A Phosphoserine modification is found at S263. A compositionally biased stretch (polar residues) spans 292-303; sequence KNSSNSKPTQQI. Disordered stretches follow at residues 292-322 and 360-379; these read KNSSNSKPTQQIIPEGTATTERRGSTISPTT and SISSSLNRISHSSSTTRQQR. Phosphoserine occurs at positions 316 and 319. Low complexity predominate over residues 360–373; that stretch reads SISSSLNRISHSSS. At T479 the chain carries Phosphothreonine. The segment at 502-566 is disordered; the sequence is TSQAHHAAQH…KSITTIDPNN (65 aa). The span at 504–515 shows a compositional bias: low complexity; it reads QAHHAAQHHQQQ. Polar residues-rich tracts occupy residues 516-525 and 532-547; these read PTKQATVSPN and SSVTLSPTISHNNNNG. Position 558 is a phosphoserine (S558). 2 consecutive C2H2-type zinc fingers follow at residues 573–596 and 602–624; these read FKCKDCEKAFRRSEHLKRHIRSVH and FACMFCEKKFSRSDNLSQHLKTH.

The protein localises to the cytoplasm. It localises to the nucleus. Functionally, positive transcriptional factor that acts as a component of the stress responsive system. Recognizes and binds to the stress response element (STRE) which is involved in the response to various forms of stress (heat, oxidative, osmotic, etc.). Involved in the regulation of the CTT1, DDR2, HSP12 genes. The protein is Zinc finger protein MSN4 (MSN4) of Saccharomyces cerevisiae (strain ATCC 204508 / S288c) (Baker's yeast).